A 268-amino-acid chain; its full sequence is MDLYAVWGNPITQSKSPLIQNKLAAQTHQTMEYIAKLGNLDSFEQQLLAFFEGGAKGCNITSPFKERAYQLADEYSQRAKLAEACNTLKKLDDGKLYADNTDGIGLVTDLQRLNWLHPNQRILILGAGGATKGVLLPLLQAQQNIVLANRTFSKAKELAERFQPYGNIQAASMDSIPLQTYDVVINATSAGLSGGTAPVDAEILKLGSAFYDMQYAKGTDTPFIALCKSLGLTNVSDGFGMLVAQAAHSFHLWRGVMPDFVAVYEQLK.

Shikimate-binding positions include 14–16 (SKS) and T61. Catalysis depends on K65, which acts as the Proton acceptor. 2 residues coordinate shikimate: N86 and D102. NADP(+) contacts are provided by residues 126-130 (GAGGA), 149-154 (NRTFSK), and M213. Y215 is a binding site for shikimate. G238 contributes to the NADP(+) binding site.

The protein belongs to the shikimate dehydrogenase family. As to quaternary structure, homodimer.

The enzyme catalyses shikimate + NADP(+) = 3-dehydroshikimate + NADPH + H(+). It participates in metabolic intermediate biosynthesis; chorismate biosynthesis; chorismate from D-erythrose 4-phosphate and phosphoenolpyruvate: step 4/7. In terms of biological role, involved in the biosynthesis of the chorismate, which leads to the biosynthesis of aromatic amino acids. Catalyzes the reversible NADPH linked reduction of 3-dehydroshikimate (DHSA) to yield shikimate (SA). The polypeptide is Shikimate dehydrogenase (NADP(+)) (Haemophilus influenzae (strain PittEE)).